The following is a 307-amino-acid chain: uncharacterized protein (307 aa).

This is an uncharacterized protein from Archaeoglobus fulgidus (strain ATCC 49558 / DSM 4304 / JCM 9628 / NBRC 100126 / VC-16).